A 586-amino-acid polypeptide reads, in one-letter code: 2-succinyl-5-enolpyruvyl-6-hydroxy-3-cyclohexene-1-carboxylate synthase (586 aa).

Belongs to the TPP enzyme family. MenD subfamily. As to quaternary structure, homodimer. Mg(2+) is required as a cofactor. The cofactor is Mn(2+). Requires thiamine diphosphate as cofactor.

The catalysed reaction is isochorismate + 2-oxoglutarate + H(+) = 5-enolpyruvoyl-6-hydroxy-2-succinyl-cyclohex-3-ene-1-carboxylate + CO2. Its pathway is quinol/quinone metabolism; 1,4-dihydroxy-2-naphthoate biosynthesis; 1,4-dihydroxy-2-naphthoate from chorismate: step 2/7. The protein operates within quinol/quinone metabolism; menaquinone biosynthesis. Catalyzes the thiamine diphosphate-dependent decarboxylation of 2-oxoglutarate and the subsequent addition of the resulting succinic semialdehyde-thiamine pyrophosphate anion to isochorismate to yield 2-succinyl-5-enolpyruvyl-6-hydroxy-3-cyclohexene-1-carboxylate (SEPHCHC). The polypeptide is 2-succinyl-5-enolpyruvyl-6-hydroxy-3-cyclohexene-1-carboxylate synthase (Natronomonas pharaonis (strain ATCC 35678 / DSM 2160 / CIP 103997 / JCM 8858 / NBRC 14720 / NCIMB 2260 / Gabara) (Halobacterium pharaonis)).